Here is a 208-residue protein sequence, read N- to C-terminus: Putative adhesin P1-like protein MPN_468 (208 aa).

2 disordered regions span residues 29-49 (TNGS…VAPT) and 97-172 (DSKT…NLTP). Residues 100 to 132 (TQNNTTTNENHTKFASATGSGQQQGSTTTTSAG) show a composition bias toward low complexity. Residues 145-158 (SGNSISVQEATSGD) are compositionally biased toward polar residues. Residues 159–172 (NLTNYTNLPPNLTP) show a composition bias toward low complexity.

Belongs to the adhesin P1 family.

The protein is Putative adhesin P1-like protein MPN_468 of Mycoplasma pneumoniae (strain ATCC 29342 / M129 / Subtype 1) (Mycoplasmoides pneumoniae).